Here is a 336-residue protein sequence, read N- to C-terminus: Cyclin-H1-1 (336 aa).

Position 2 is an N-acetylalanine (Ala2). The tract at residues 297 to 336 is disordered; the sequence is KSCLGHSSSHDESKKREKRSKHKSHRSSNDTPNGAPPPIG. Basic residues predominate over residues 312–322; the sequence is REKRSKHKSHR.

The protein belongs to the cyclin family. In terms of assembly, interacts with CDKA-1, CDKD-2 and CDKD-3, but not CDKD-1 and CDKF-1.

Its subcellular location is the cytoplasm. It localises to the nucleus. In terms of biological role, associates with CDK-2 and CDK-3 and activates the CDK kinases. The chain is Cyclin-H1-1 (CYCH1-1) from Arabidopsis thaliana (Mouse-ear cress).